Reading from the N-terminus, the 430-residue chain is UDP-N-acetylglucosamine 1-carboxyvinyltransferase (430 aa).

22–23 lines the phosphoenolpyruvate pocket; the sequence is KN. Arginine 102 serves as a coordination point for UDP-N-acetyl-alpha-D-glucosamine. Catalysis depends on cysteine 126, which acts as the Proton donor. Position 126 is a 2-(S-cysteinyl)pyruvic acid O-phosphothioketal (cysteine 126). UDP-N-acetyl-alpha-D-glucosamine is bound by residues 131 to 135, 172 to 175, aspartate 317, and isoleucine 339; these read RPVDL and KVSV.

Belongs to the EPSP synthase family. MurA subfamily.

The protein resides in the cytoplasm. The catalysed reaction is phosphoenolpyruvate + UDP-N-acetyl-alpha-D-glucosamine = UDP-N-acetyl-3-O-(1-carboxyvinyl)-alpha-D-glucosamine + phosphate. The protein operates within cell wall biogenesis; peptidoglycan biosynthesis. Its function is as follows. Cell wall formation. Adds enolpyruvyl to UDP-N-acetylglucosamine. This chain is UDP-N-acetylglucosamine 1-carboxyvinyltransferase, found in Sinorhizobium fredii (strain NBRC 101917 / NGR234).